The following is a 364-amino-acid chain: tRNA 2-selenouridine synthase (364 aa).

The region spanning 14–137 (LIADTPIIDV…LRQTAIQATI (124 aa)) is the Rhodanese domain. Cys-97 (S-selanylcysteine intermediate) is an active-site residue.

This sequence belongs to the SelU family. As to quaternary structure, monomer.

It carries out the reaction 5-methylaminomethyl-2-thiouridine(34) in tRNA + selenophosphate + (2E)-geranyl diphosphate + H2O + H(+) = 5-methylaminomethyl-2-selenouridine(34) in tRNA + (2E)-thiogeraniol + phosphate + diphosphate. It catalyses the reaction 5-methylaminomethyl-2-thiouridine(34) in tRNA + (2E)-geranyl diphosphate = 5-methylaminomethyl-S-(2E)-geranyl-thiouridine(34) in tRNA + diphosphate. The catalysed reaction is 5-methylaminomethyl-S-(2E)-geranyl-thiouridine(34) in tRNA + selenophosphate + H(+) = 5-methylaminomethyl-2-(Se-phospho)selenouridine(34) in tRNA + (2E)-thiogeraniol. The enzyme catalyses 5-methylaminomethyl-2-(Se-phospho)selenouridine(34) in tRNA + H2O = 5-methylaminomethyl-2-selenouridine(34) in tRNA + phosphate. In terms of biological role, involved in the post-transcriptional modification of the uridine at the wobble position (U34) of tRNA(Lys), tRNA(Glu) and tRNA(Gln). Catalyzes the conversion of 2-thiouridine (S2U-RNA) to 2-selenouridine (Se2U-RNA). Acts in a two-step process involving geranylation of 2-thiouridine (S2U) to S-geranyl-2-thiouridine (geS2U) and subsequent selenation of the latter derivative to 2-selenouridine (Se2U) in the tRNA chain. The chain is tRNA 2-selenouridine synthase from Escherichia coli O157:H7.